An 845-amino-acid chain; its full sequence is Translation initiation factor IF-2 (845 aa).

Disordered stretches follow at residues 45 to 91 (RRKI…SNLS) and 127 to 209 (EESL…TPKV). A compositionally biased stretch (polar residues) spans 81–91 (SESSMAKSNLS). Basic and acidic residues predominate over residues 137-149 (TEIHQEEQKEEKN). Positions 151–162 (PVQTSPLSSAHS) are enriched in polar residues. The span at 179-193 (TEKRKADEIKNDDRH) shows a compositional bias: basic and acidic residues. One can recognise a tr-type G domain in the interval 343 to 512 (PRPPVVTIMG…LLQAELLDLK (170 aa)). Residues 352 to 359 (GHVDHGKT) form a G1 region. Residue 352–359 (GHVDHGKT) participates in GTP binding. The segment at 377–381 (GITQH) is G2. Residues 398–401 (DTPG) are G3. Residues 398 to 402 (DTPGH) and 452 to 455 (NKID) each bind GTP. Positions 452–455 (NKID) are G4. Residues 488–490 (SAK) form a G5 region.

It belongs to the TRAFAC class translation factor GTPase superfamily. Classic translation factor GTPase family. IF-2 subfamily.

It is found in the cytoplasm. In terms of biological role, one of the essential components for the initiation of protein synthesis. Protects formylmethionyl-tRNA from spontaneous hydrolysis and promotes its binding to the 30S ribosomal subunits. Also involved in the hydrolysis of GTP during the formation of the 70S ribosomal complex. This chain is Translation initiation factor IF-2, found in Bartonella quintana (strain Toulouse) (Rochalimaea quintana).